The following is a 694-amino-acid chain: Polyribonucleotide nucleotidyltransferase (694 aa).

Mg(2+)-binding residues include Asp-485 and Asp-491. In terms of domain architecture, KH spans 552 to 611 (PRIETMQIKPNKIATVIGPGGKQIRQIIEEAGVQIDINDSGLVSISASSPQAIEKAKSMI). Residues 621–689 (GKIYEGRVTS…EKGQYKLSHK (69 aa)) enclose the S1 motif domain.

Belongs to the polyribonucleotide nucleotidyltransferase family. Mg(2+) serves as cofactor.

The protein resides in the cytoplasm. The enzyme catalyses RNA(n+1) + phosphate = RNA(n) + a ribonucleoside 5'-diphosphate. Functionally, involved in mRNA degradation. Catalyzes the phosphorolysis of single-stranded polyribonucleotides processively in the 3'- to 5'-direction. The polypeptide is Polyribonucleotide nucleotidyltransferase (Chlamydia caviae (strain ATCC VR-813 / DSM 19441 / 03DC25 / GPIC) (Chlamydophila caviae)).